The chain runs to 418 residues: Putative methylthiotransferase jhp_0270 (418 aa).

An MTTase N-terminal domain is found at 2–110 (KKVYFKTFGC…INALLQEKKR (109 aa)). C11, C45, C74, C144, C148, and C151 together coordinate [4Fe-4S] cluster. One can recognise a Radical SAM core domain in the interval 130–355 (FVGKTRAFIK…KDLIFHKNKA (226 aa)).

The protein belongs to the methylthiotransferase family. Requires [4Fe-4S] cluster as cofactor.

The polypeptide is Putative methylthiotransferase jhp_0270 (Helicobacter pylori (strain J99 / ATCC 700824) (Campylobacter pylori J99)).